A 333-amino-acid chain; its full sequence is Sphingomyelinase C (333 aa).

The N-terminal stretch at 1–27 (MKGKLLKGVLSLGVGLGALYSGTSAQA) is a signal peptide. C150 and C186 are disulfide-bonded.

This sequence belongs to the neutral sphingomyelinase family. Mg(2+) is required as a cofactor.

Its subcellular location is the secreted. The catalysed reaction is a sphingomyelin + H2O = phosphocholine + an N-acylsphing-4-enine + H(+). Activated by cobalt and manganese ions. Functionally, required, with sphingomyelinase, to effect target cell lysis (hemolysis). The chain is Sphingomyelinase C (sph) from Bacillus cereus.